The primary structure comprises 257 residues: LexA repressor (257 aa).

Positions 64-84 (FREIGEAAGLKSPSSVKHQLQ) form a DNA-binding region, H-T-H motif. Residues serine 181 and lysine 218 each act as for autocatalytic cleavage activity in the active site.

Belongs to the peptidase S24 family. In terms of assembly, homodimer.

The catalysed reaction is Hydrolysis of Ala-|-Gly bond in repressor LexA.. Its function is as follows. Represses a number of genes involved in the response to DNA damage (SOS response), including recA and lexA. In the presence of single-stranded DNA, RecA interacts with LexA causing an autocatalytic cleavage which disrupts the DNA-binding part of LexA, leading to derepression of the SOS regulon and eventually DNA repair. The sequence is that of LexA repressor from Bifidobacterium adolescentis (strain ATCC 15703 / DSM 20083 / NCTC 11814 / E194a).